A 336-amino-acid polypeptide reads, in one-letter code: UDP-3-O-acylglucosamine N-acyltransferase (336 aa).

The active-site Proton acceptor is histidine 233.

Belongs to the transferase hexapeptide repeat family. LpxD subfamily. As to quaternary structure, homotrimer.

The catalysed reaction is a UDP-3-O-[(3R)-3-hydroxyacyl]-alpha-D-glucosamine + a (3R)-hydroxyacyl-[ACP] = a UDP-2-N,3-O-bis[(3R)-3-hydroxyacyl]-alpha-D-glucosamine + holo-[ACP] + H(+). It functions in the pathway bacterial outer membrane biogenesis; LPS lipid A biosynthesis. Functionally, catalyzes the N-acylation of UDP-3-O-acylglucosamine using 3-hydroxyacyl-ACP as the acyl donor. Is involved in the biosynthesis of lipid A, a phosphorylated glycolipid that anchors the lipopolysaccharide to the outer membrane of the cell. The chain is UDP-3-O-acylglucosamine N-acyltransferase from Helicobacter pylori (strain HPAG1).